Here is a 472-residue protein sequence, read N- to C-terminus: uncharacterized protein (472 aa).

Transmembrane regions (helical) follow at residues 14–34 (VIVGILLAGAFVAILNQTLLI), 53–73 (WLTTSFMLTNGILIPITAFLI), 80–100 (ALLITAMSIFTAGTVVGAFAP), 113–133 (AAGAGIMMPLMQTVFLTIFPI), 142–162 (MVGLVISFAPAIGPTLSGWAV), 169–189 (SLFYIILPFAVIDLILASILM), 202–222 (ILSVILSTFGFGGLLYGFSSV), 227–247 (WSSSTVLISLLVGVIALLLFI), 263–283 (FTFGVFSLTTLLGTLVFALLI), 302–322 (FDTGLMLLPGAVVMGFMSPII), 333–353 (GLAIAGFCIIFLTSLPFMQLT), 359–379 (AWIVVLYTVRLLGTAMIMMPV), 405–427 (VGGSIGTALLVSVMSNQAAHAGT), and 437–457 (GMNAAFIVAAVIALVGFLLSF).

This sequence belongs to the major facilitator superfamily. EmrB family.

The protein localises to the cell membrane. This is an uncharacterized protein from Bacillus subtilis (strain 168).